A 637-amino-acid polypeptide reads, in one-letter code: Probable potassium transport system protein Kup 2 (637 aa).

Transmembrane regions (helical) follow at residues Phe-18 to Leu-38, Leu-61 to Leu-81, Met-107 to Ile-127, Pro-145 to Val-165, Ala-174 to Ile-194, Ala-211 to Leu-231, Trp-255 to Leu-275, Ala-293 to Ile-313, Ile-345 to Phe-365, Leu-371 to Phe-391, Ala-402 to Ala-422, and Asp-429 to Thr-449.

This sequence belongs to the HAK/KUP transporter (TC 2.A.72) family.

Its subcellular location is the cell inner membrane. The enzyme catalyses K(+)(in) + H(+)(in) = K(+)(out) + H(+)(out). Its function is as follows. Transport of potassium into the cell. Likely operates as a K(+):H(+) symporter. The polypeptide is Probable potassium transport system protein Kup 2 (Agrobacterium fabrum (strain C58 / ATCC 33970) (Agrobacterium tumefaciens (strain C58))).